A 270-amino-acid chain; its full sequence is MAEQINESHQRFLQVLMSHGIMESSLVRALHRHCCEVHKVNYMHDNLDDFVGVLNKHLQPLFMKIEKGVGEEDGLTYYALVNRVENDITKMASDYAENELELFRKTMELIIISENGFAPPISILNLADELQSKKMKKKEVEQLLQSFVQDKWLIGRNGEYTLHTRCIMELEHYILNTYQDVAKICNVCHKIAIQCQLCENCGIPLHLQCAGIYFRGIANPLCPNCKESWPHEIPDLSQVSSQGPSHSQAAPVRGRNQRSRNISTVARTSR.

Residues 185 to 226 form an RING-type; atypical zinc finger; sequence CNVCHKIAIQCQLCENCGIPLHLQCAGIYFRGIANPLCPNCK. Residues 236 to 270 are disordered; that stretch reads LSQVSSQGPSHSQAAPVRGRNQRSRNISTVARTSR. 2 stretches are compositionally biased toward polar residues: residues 237-248 and 259-270; these read SQVSSQGPSHSQ and SRNISTVARTSR.

It belongs to the NSE1 family. Component of the SMC5-SMC6 complex.

The protein localises to the nucleus. It localises to the chromosome. It is found in the telomere. It carries out the reaction S-ubiquitinyl-[E2 ubiquitin-conjugating enzyme]-L-cysteine + [acceptor protein]-L-lysine = [E2 ubiquitin-conjugating enzyme]-L-cysteine + N(6)-ubiquitinyl-[acceptor protein]-L-lysine.. Its function is as follows. RING-type zinc finger-containing E3 ubiquitin ligase that assembles with melanoma antigen protein (MAGE) to catalyze the direct transfer of ubiquitin from E2 ubiquitin-conjugating enzyme to a specific substrate. Within MAGE-RING ubiquitin ligase complex, MAGE stimulates and specifies ubiquitin ligase activity likely through recruitment and/or stabilization of the E2 ubiquitin-conjugating enzyme at the E3:substrate complex. Involved in maintenance of genome integrity, DNA damage response and DNA repair. The protein is Non-structural maintenance of chromosomes element 1 homolog (nsmce1) of Xenopus tropicalis (Western clawed frog).